Consider the following 157-residue polypeptide: UPF0179 protein Mhun_1135 (157 aa).

The protein belongs to the UPF0179 family.

This Methanospirillum hungatei JF-1 (strain ATCC 27890 / DSM 864 / NBRC 100397 / JF-1) protein is UPF0179 protein Mhun_1135.